The following is a 451-amino-acid chain: Golgi reassembly-stacking protein 2 (451 aa).

G2 is lipidated: N-myristoyl glycine. PDZ GRASP-type domains follow at residues 15–105 (EGYH…FCSF) and 111–199 (NVWH…YGYL). Residues 15–215 (EGYHVLRVQE…PFEEGKKISL (201 aa)) form a GRASP region. Dimethylated arginine occurs at positions 30 and 47. An important for membrane binding region spans residues 194–199 (IGYGYL). S214 carries the phosphoserine modification. T222 carries the post-translational modification Phosphothreonine. Position 225 is a phosphothreonine; by MAPK (T225). Residues 236–252 (LSSVSPPSLSPPGTTGV) are compositionally biased toward low complexity. Disordered regions lie at residues 236-255 (LSSVSPPSLSPPGTTGVEQS) and 377-451 (EGSS…SEPS). Polar residues predominate over residues 410–424 (SSLTVDVTSPASKVP). Position 411 is a phosphoserine (S411). 2 positions are modified to phosphothreonine: T417 and T435. Phosphoserine occurs at positions 443 and 448.

The protein belongs to the GORASP family. In terms of assembly, homodimer. Homooligomer. ER stress induces phosphorylation-dependent monomerization. Interacts with BLZF1/Golgin 45. Identified in a complex with RAB2 and GORASP2. Interacts with JAM2 and JAM3. Interacts with members of the p24 cargo receptors. Interacts with CNIH and the cytoplasmic domain of transmembrane TGFA, prior its transit in the trans-Golgi. Interacts with KCTD5. Interacts with TMED2 and TMED3. Interacts with SEC16A in response to ER stress. Interacts (via PDZ GRASP-type 1 domain) with core-glycosylated CFTR in response to ER stress. Myristoylated. Myristoylation is essential for the Golgi targeting. Post-translationally, palmitoylated. In terms of processing, phosphorylated in mitotic cells. ER stress-induced phosphorylation at Ser-443 induces monomerization and subsequent relocalization from Golgi to ER which is essential for mediating unconventional (ER/Golgi-independent) trafficking of CFTR to the cell membrane. In terms of tissue distribution, detected in lung, heart and testis. Colocalized in a polarized fashion in the acrosome region with JAM3 in round spermatids (at protein level).

It localises to the golgi apparatus membrane. The protein localises to the endoplasmic reticulum membrane. It is found in the golgi apparatus. Key structural protein of the Golgi apparatus. The membrane cisternae of the Golgi apparatus adhere to each other to form stacks, which are aligned side by side to form the Golgi ribbon. Acting in concert with GORASP1/GRASP65, is required for the formation and maintenance of the Golgi ribbon, and may be dispensable for the formation of stacks. However, other studies suggest that GORASP2 plays a role in assembly and membrane stacking of the Golgi cisternae, and in the process by which Golgi stacks reform after breakdown during mitosis and meiosis. May regulate the intracellular transport and presentation of a defined set of transmembrane proteins, such as transmembrane TGFA. Required for normal acrosome formation during spermiogenesis and normal male fertility, probably by promoting colocalization of JAM2 and JAM3 at contact sites between germ cells and Sertoli cells. Mediates ER stress-induced unconventional (ER/Golgi-independent) trafficking of core-glycosylated CFTR to cell membrane. The sequence is that of Golgi reassembly-stacking protein 2 (Gorasp2) from Mus musculus (Mouse).